The chain runs to 373 residues: uncharacterized protein (373 aa).

The WSC domain occupies Asp15–Glu101. Disordered stretches follow at residues Glu101 to Ser171, Phe183 to Ser210, and Asn291 to Ala316. Composition is skewed to low complexity over residues Ser110–Ser171 and Phe183–Ser204.

This is an uncharacterized protein from Pichia angusta (Yeast).